Reading from the N-terminus, the 77-residue chain is Large ribosomal subunit protein bL28 (77 aa).

This sequence belongs to the bacterial ribosomal protein bL28 family.

This is Large ribosomal subunit protein bL28 from Cupriavidus necator (strain ATCC 17699 / DSM 428 / KCTC 22496 / NCIMB 10442 / H16 / Stanier 337) (Ralstonia eutropha).